The chain runs to 151 residues: uncharacterized protein (151 aa).

The [4Fe-4S] cluster site is built by C24, C27, C92, and C129.

Belongs to the complex I 20 kDa subunit family. The cofactor is [4Fe-4S] cluster.

This is an uncharacterized protein from Methanocaldococcus jannaschii (strain ATCC 43067 / DSM 2661 / JAL-1 / JCM 10045 / NBRC 100440) (Methanococcus jannaschii).